We begin with the raw amino-acid sequence, 403 residues long: MVHCAGCERPILDRFLLNVLDRAWHVKCVQCCECKCNLTEKCFSREGKLYCKNDFFRRFGTKCAGCAQGISPSDLVRRARSKVFHLNCFTCMMCNKQLSTGEELYIIDENKFVCKEDYLNNNNAAKENSFISVTGSDPSLSPESQDPLQDDAKDSESANVSDKEAGINENDDQNLGAKRRGPRTTIKAKQLETLKAAFAATPKPTRHIREQLAQETGLNMRVIQVWFQNRRSKERRMKQLSALGARRHAFFRSPRRMRPLVDRLEPGELIPNGPFAFYGDYQSEYYGPGSNYDFFPQGPPSSQAQTPVDLPFVPSSVPAGTPLGAMDHPIPGHHPSSDAQRFTDIMSHPPGDSPSPEPNLPGSMHSMSAEVFGQSPPFSSLSVNGGYGNHLSHPPEMNETAVW.

2 consecutive LIM zinc-binding domains span residues 4–54 (CAGC…CKND) and 63–117 (CAGC…CKED). A compositionally biased stretch (polar residues) spans 131-147 (ISVTGSDPSLSPESQDP). 2 disordered regions span residues 131–185 (ISVT…PRTT) and 318–366 (PAGT…SMHS). The segment covering 150 to 166 (DDAKDSESANVSDKEAG) has biased composition (basic and acidic residues). Positions 179–238 (RRGPRTTIKAKQLETLKAAFAATPKPTRHIREQLAQETGLNMRVIQVWFQNRRSKERRMK) form a DNA-binding region, homeobox.

As to quaternary structure, interacts with ldb1 via the tandem LIM domains. Both LIM domains are required for optimal binding and binding relieves the inhibitory effect of the LIM domains and activates lhx1. Binding to ldb1 also prevents degradation of ldb1 by rnf12. The stoichiometry of lhx1 and ldb1 is important for their function and an excess of ldb1 can inhibit lhx1 function. Interacts with the N-terminal region of rnf12 by a homeobox-dependent mechanism. Exhibits a biphasic expression pattern. Initially localized to the Spemann organizer region of gastrulae, leading to expression in prechordal mesoderm and notochord. In the second phase, expressed in the lateral mesoderm and neural plate, eventually concentrating in the pronephros and the CNS. Expressed in the pronephros primordium by late gastrula (stage 12.5) and becomes restricted to the tips of the tubules and ducts as kidney development progresses. In the CNS, becomes progressively recognizable in anatomically distinct structures during larval development. Within the forebrain, shows almost identical expression to lhx5 in the diencephalon, being expressed in alternating stripes to lhx2 and lhx9. Expressed in the diencephalic pretectum within prosomere 1, hypothalamus, ventral thalamus and zona limitans intrathalamica. In the telencephalon, the expression pattern is distinct from lhx5, being localized in the pallium and subpallium. Also expressed in the ventral territories of midbrain (mesencephalon) and hindbrain (rhombencephalon), being expressed in the mesencephalic tegmentum and hindbrain reticular formation. Also shows intense expression in the cerebellum including Purkinje cells.

It localises to the nucleus. Involved in the establishment of the body plan via the Spemann organizer during gastrulation. Transcriptional activator required to induce organizer gene expression downstream of siamois. Promotes head formation by binding to 5'-TAAT'-3' elements in the promoters of head organizer genes cer1 and gsc to stimulate expression. Binds as a complex with siamois and mix-A/mix.1 to the cer1 promoter, and with ldb1 and otx2 to the gsc promoter. Also involved in neural induction via the organizer, including a role in notochord formation. Acts synergistically with ldb1 and ssbp in subsequent axis formation. Involved in kidney development, acting synergistically with pax8 to establish the pronephric primordium in late gastrulae/early neurulae and with pax2 during pronephric morphogenesis in tailbud stages. Has a later role in mediating the activity of inhibitors of ventralization. In Xenopus laevis (African clawed frog), this protein is LIM/homeobox protein Lhx1 (lhx1).